Consider the following 657-residue polypeptide: DNA mismatch repair protein MutL (657 aa).

Belongs to the DNA mismatch repair MutL/HexB family.

This protein is involved in the repair of mismatches in DNA. It is required for dam-dependent methyl-directed DNA mismatch repair. May act as a 'molecular matchmaker', a protein that promotes the formation of a stable complex between two or more DNA-binding proteins in an ATP-dependent manner without itself being part of a final effector complex. The protein is DNA mismatch repair protein MutL of Streptococcus agalactiae serotype Ia (strain ATCC 27591 / A909 / CDC SS700).